The primary structure comprises 431 residues: Helix-loop-helix protein 11 (431 aa).

Residues 88-109 are disordered; the sequence is LANRSLSQPAPLSPTSLDPDRR. Residues 91–103 show a composition bias toward polar residues; sequence RSLSQPAPLSPTS. The bHLH domain maps to 112-163; it reads MRRQIANCNERRRMQSINAGFLALRALLPRKEGEKLSKAAILQQTADMVHQL. Polar residues-rich tracts occupy residues 226-241 and 248-257; these read TTTSSQASSPVTPRSN and LPSSYASSAL. A disordered region spans residues 226–311; it reads TTTSSQASSP…PPPTLPSLET (86 aa). The segment covering 274–291 has biased composition (low complexity); that stretch reads TTSTPLSLLTLNGSPTSS.

Expressed in the pharynx, nerve cords, the H-shaped excretory cell, vulva muscles, and the anal depressor (at protein level). Expressed in the intestine (at protein level). In males, it is also expressed in the spicules and hyp7 cells of the hypodermis (at protein level).

Its subcellular location is the nucleus. In terms of biological role, transcriptional regulator. Component of a feedback loop involving atfs-1, atgl-1 and hlh-11. Binds to the promoter of the atgl-1 lipase to negatively regulate the expression of atgl-1, and thereby promoting fat oxidation in response to mitochondrial stress and mitochondrial respiration in the intestine. In addition, functions with atfs-1 to maintain lifespan. May have a role in fertility and in positively regulating body size. The protein is Helix-loop-helix protein 11 of Caenorhabditis elegans.